The sequence spans 675 residues: Sodium/myo-inositol cotransporter 2 (675 aa).

At 1–27 (MESGTSSPQPPQLDPLDAFPQKGLEPG) the chain is on the extracellular side. Residues 28–48 (DIAVLVLYFLFVLAVGLWSTV) traverse the membrane as a helical segment. At 49 to 65 (KTKRDTVKGYFLAGGDM) the chain is on the cytoplasmic side. A helical membrane pass occupies residues 66–88 (VWWPVGASLFASNVGSGHFIGLA). Residues 89–102 (GSGAATGISVSAYE) lie on the Extracellular side of the membrane. A helical membrane pass occupies residues 103–123 (LNGLFSVLMLAWIFLPIYIAG). The Cytoplasmic segment spans residues 124 to 135 (QVTTMPEYLRKR). A helical membrane pass occupies residues 136–156 (FGGIRIPIILAVLYLFIYIFT). At 157–180 (KISVDMYAGAIFIQQSLHLDLYLA) the chain is on the extracellular side. The chain crosses the membrane as a helical span at residues 181–201 (IVGLLAITAVYTVAGGLAAVI). At 202-208 (YTDALQT) the chain is on the cytoplasmic side. The chain crosses the membrane as a helical span at residues 209–229 (LIMLIGALTLMGYSFAAVGGM). The Extracellular segment spans residues 230-272 (EGLKEKYFLALASNRSENSSCGLPREDAFHIFRDPLTSDLPWP). A helical transmembrane segment spans residues 273–293 (GVLFGMSIPSLWYWCTDQVIV). The Cytoplasmic segment spans residues 294–308 (QRTLAAKNLSHAKGG). Residues 309-329 (ALMAAYLKVLPLFIMVFPGMV) traverse the membrane as a helical segment. The Extracellular portion of the chain corresponds to 330–375 (SRILFPDQVACADPEICQKICSNPSGCSDIAYPKLVLELLPTGLRG). The helical transmembrane segment at 376–396 (LMMAVMVAALMSSLTSIFNSA) threads the bilayer. Residues 397–418 (STIFTMDLWNHLRPRASEKELM) are Cytoplasmic-facing. Residues 419-439 (IVGRVFVLLLVLVSILWIPVV) traverse the membrane as a helical segment. Topologically, residues 440-446 (QASQGGQ) are extracellular. Residues 447 to 467 (LFIYIQSISSYLQPPVAVVFI) form a helical membrane-spanning segment. At 468 to 479 (MGCFWKRTNEKG) the chain is on the cytoplasmic side. A helical membrane pass occupies residues 480–500 (AFWGLISGLLLGLVRLVLDFI). Residues 501–521 (YVQPRCDQPDERPVLVKSIHY) are Extracellular-facing. A helical membrane pass occupies residues 522–542 (LYFSMILSTVTLITVSTVSWF). The Cytoplasmic segment spans residues 543-654 (TEPPSKEMVS…SLEENPLVKT (112 aa)). A helical membrane pass occupies residues 655–675 (LLDVNLIFCVSCAIFIWGYFA).

This sequence belongs to the sodium:solute symporter (SSF) (TC 2.A.21) family. As to expression, highest expression in heart, skeletal muscle, kidney, liver and placenta. Weaker expression in brain, colon, spleen, lung and peripheral blood leukocytes.

It is found in the membrane. Its subcellular location is the apical cell membrane. It catalyses the reaction myo-inositol(out) + 2 Na(+)(out) = myo-inositol(in) + 2 Na(+)(in). The catalysed reaction is 1D-chiro-inositol(out) + 2 Na(+)(out) = 1D-chiro-inositol(in) + 2 Na(+)(in). The enzyme catalyses D-glucose(out) + 2 Na(+)(out) = D-glucose(in) + 2 Na(+)(in). It carries out the reaction D-xylose(out) + 2 Na(+)(out) = D-xylose(in) + 2 Na(+)(in). Its activity is regulated as follows. MI transport activity inhibited by D-chiro-inositol (DCI), phlorizin (Pz) and sodium (Na(+)). Insulin increases D-chiro-inositol uptake. Functionally, involved in the sodium-dependent cotransport of myo-inositol (MI) with a Na(+):MI stoichiometry of 2:1. Exclusively responsible for apical MI transport and absorption in intestine. Can also transport D-chiro-inositol (DCI) but not L-fucose. Exhibits stereospecific cotransport of both D-glucose and D-xylose. May induce apoptosis through the TNF-alpha, PDCD1 pathway. May play a role in the regulation of MI concentration in serum, involving reabsorption in at least the proximal tubule of the kidney. This is Sodium/myo-inositol cotransporter 2 from Homo sapiens (Human).